The primary structure comprises 288 residues: Syntaxin-1A (288 aa).

The Cytoplasmic portion of the chain corresponds to 1 to 265 (MKDRTQELRT…KYQSKARRKK (265 aa)). Phosphoserine is present on residues Ser-14, Ser-64, and Ser-95. The stretch at 68–109 (DEKTKEELEELMSDIKKTANKVRSKLKSIEQSIEQEEGLNRS) forms a coiled coil. Ser-188 is subject to Phosphoserine; by DAPK1. A t-SNARE coiled-coil homology domain is found at 192 to 254 (LSEIETRHSE…ERAVSDTKKA (63 aa)). Glycyl lysine isopeptide (Lys-Gly) (interchain with G-Cter in SUMO) cross-links involve residues Lys-252, Lys-253, and Lys-256. The helical; Anchor for type IV membrane protein transmembrane segment at 266 to 286 (IMIIICCVIPGIVIASTVGGI) threads the bilayer. Residues 287-288 (FA) are Extracellular-facing.

Belongs to the syntaxin family. Part of the SNARE core complex containing SNAP25, VAMP2 and STX1A; this complex constitutes the basic catalytic machinery of the complex neurotransmitter release apparatus. The SNARE complex interacts with CPLX1. Interacts with STXBP1. The interaction with STXBP1 promotes assembly of the SNARE complex. Interacts (via C-terminus) with KCNB1 (via C-terminus); the interaction increases in a calcium-dependent manner and induces a pore-independent enhancement of exocytosis in neuroendocrine cells, chromaffin cells, pancreatic beta cells and from the soma of dorsal root ganglia (DRG) neurons. Interacts with SYTL4. Interacts with STXBP6. Interacts with PLCL1 (via C2 domain). Interacts with OTOF. Interacts with LGI3. Interacts (via the H3 domain) with SLC6A4 (via the N-terminus); this interaction regulates SLC4A6 channel conductance in thalamocortical neurons. Interacts with SYT6 and SYT8; the interaction is Ca(2+)-dependent. Interacts with VAMP8. Interacts with SNAP23. Interacts with VAPA and SYBU. Interacts with PRRT2. Interacts with SEPT8. Interacts with STXBP5L. Interacts with synaptotagmin-1/SYT1. Interacts with SEPTIN5; in the cerebellar cortex. Interacts with SEPTIN4; in the striatum. Post-translationally, phosphorylated by CK2. Phosphorylation at Ser-188 by DAPK1 significantly decreases its interaction with STXBP1. Sumoylated, sumoylation is required for regulation of synaptic vesicle endocytosis.

Its subcellular location is the cytoplasmic vesicle. It is found in the secretory vesicle. The protein localises to the synaptic vesicle membrane. The protein resides in the cell membrane. It localises to the synapse. Its subcellular location is the synaptosome. In terms of biological role, plays an essential role in hormone and neurotransmitter calcium-dependent exocytosis and endocytosis. Part of the SNARE (Soluble NSF Attachment Receptor) complex composed of SNAP25, STX1A and VAMP2 which mediates the fusion of synaptic vesicles with the presynaptic plasma membrane. STX1A and SNAP25 are localized on the plasma membrane while VAMP2 resides in synaptic vesicles. The pairing of the three SNAREs from the N-terminal SNARE motifs to the C-terminal anchors leads to the formation of the SNARE complex, which brings membranes into close proximity and results in final fusion. Participates in the calcium-dependent regulation of acrosomal exocytosis in sperm. Also plays an important role in the exocytosis of hormones such as insulin or glucagon-like peptide 1 (GLP-1). This Pongo abelii (Sumatran orangutan) protein is Syntaxin-1A (STX1A).